A 148-amino-acid polypeptide reads, in one-letter code: D-aminoacyl-tRNA deacylase (148 aa).

The Gly-cisPro motif, important for rejection of L-amino acids motif lies at 137–138 (GP).

It belongs to the DTD family. As to quaternary structure, homodimer.

The protein localises to the cytoplasm. The enzyme catalyses glycyl-tRNA(Ala) + H2O = tRNA(Ala) + glycine + H(+). It catalyses the reaction a D-aminoacyl-tRNA + H2O = a tRNA + a D-alpha-amino acid + H(+). Its function is as follows. An aminoacyl-tRNA editing enzyme that deacylates mischarged D-aminoacyl-tRNAs. Also deacylates mischarged glycyl-tRNA(Ala), protecting cells against glycine mischarging by AlaRS. Acts via tRNA-based rather than protein-based catalysis; rejects L-amino acids rather than detecting D-amino acids in the active site. By recycling D-aminoacyl-tRNA to D-amino acids and free tRNA molecules, this enzyme counteracts the toxicity associated with the formation of D-aminoacyl-tRNA entities in vivo and helps enforce protein L-homochirality. The polypeptide is D-aminoacyl-tRNA deacylase (Oenococcus oeni (strain ATCC BAA-331 / PSU-1)).